A 38-amino-acid chain; its full sequence is MILIVLLPILLAATWAFINIRGAALKQQGLGLVSKNKG.

The chain crosses the membrane as a helical span at residues 2–20 (ILIVLLPILLAATWAFINI).

This sequence belongs to the PsbY family. In terms of assembly, PSII is composed of 1 copy each of membrane proteins PsbA, PsbB, PsbC, PsbD, PsbE, PsbF, PsbH, PsbI, PsbJ, PsbK, PsbL, PsbM, PsbT, PsbX, PsbY, Psb30/Ycf12, peripheral proteins PsbO, CyanoQ (PsbQ), PsbU, PsbV and a large number of cofactors. It forms dimeric complexes.

The protein resides in the cellular thylakoid membrane. Its function is as follows. Loosely associated component of the core of photosystem II (PSII), it is not always seen in crystals. PSII is a light-driven water plastoquinone oxidoreductase, using light energy to abstract electrons from H(2)O, generating a proton gradient subsequently used for ATP formation. The protein is Photosystem II reaction center protein Y of Prochlorococcus marinus (strain MIT 9313).